The following is a 773-amino-acid chain: Acyl-homoserine lactone acylase PvdQ (773 aa).

The first 23 residues, 1-23 (MSRALPGFLFAGLSVAVVLPAQA), serve as a signal peptide directing secretion. A propeptide spans 200-221 (SQQVQALQLAAARNERFALERG) (spacer peptide). Serine 222 (nucleophile) is an active-site residue.

The protein belongs to the peptidase S45 family. In terms of assembly, heterodimer of an alpha subunit and a beta subunit processed from the same precursor.

It localises to the periplasm. It catalyses the reaction an N-acyl-L-homoserine lactone + H2O = L-homoserine lactone + a carboxylate. Functionally, catalyzes the deacylation of acyl-homoserine lactone (AHL or acyl-HSL), releasing homoserine lactone (HSL) and the corresponding fatty acid. Possesses a specificity for the degradation of long-chain acyl-HSLs (side chains of 11 to 14 carbons in length). This is Acyl-homoserine lactone acylase PvdQ (pvdQ) from Pseudomonas syringae pv. tomato (strain ATCC BAA-871 / DC3000).